The sequence spans 360 residues: Photosystem II protein D1 (360 aa).

3 helical membrane passes run 29-46, 118-133, and 142-156; these read YIGW…AATA, HFLL…QWEL, and WICV…SATA. Chlorophyll a is bound at residue His118. Tyr126 provides a ligand contact to pheophytin a. Residues Asp170 and Glu189 each coordinate [CaMn4O5] cluster. Residues 197–218 form a helical membrane-spanning segment; it reads FHMLGVAGVFGGSLFSAMHGSL. Chlorophyll a is bound at residue His198. Residues His215 and 264–265 each bind a quinone; that span reads SF. His215 contributes to the Fe cation binding site. His272 serves as a coordination point for Fe cation. The chain crosses the membrane as a helical span at residues 274-288; the sequence is FLAAWPVVGIWFTAL. The [CaMn4O5] cluster site is built by His332, Glu333, Asp342, and Ala344. Residues 345-360 constitute a propeptide that is removed on maturation; it reads AGEVAPVALTAPAING.

The protein belongs to the reaction center PufL/M/PsbA/D family. As to quaternary structure, PSII is composed of 1 copy each of membrane proteins PsbA, PsbB, PsbC, PsbD, PsbE, PsbF, PsbH, PsbI, PsbJ, PsbK, PsbL, PsbM, PsbT, PsbX, PsbY, PsbZ, Psb30/Ycf12, peripheral proteins PsbO, CyanoQ (PsbQ), PsbU, PsbV and a large number of cofactors. It forms dimeric complexes. It depends on The D1/D2 heterodimer binds P680, chlorophylls that are the primary electron donor of PSII, and subsequent electron acceptors. It shares a non-heme iron and each subunit binds pheophytin, quinone, additional chlorophylls, carotenoids and lipids. D1 provides most of the ligands for the Mn4-Ca-O5 cluster of the oxygen-evolving complex (OEC). There is also a Cl(-1) ion associated with D1 and D2, which is required for oxygen evolution. The PSII complex binds additional chlorophylls, carotenoids and specific lipids. as a cofactor. In terms of processing, tyr-161 forms a radical intermediate that is referred to as redox-active TyrZ, YZ or Y-Z. C-terminally processed by CtpA; processing is essential to allow assembly of the oxygen-evolving complex and thus photosynthetic growth.

It is found in the cellular thylakoid membrane. It catalyses the reaction 2 a plastoquinone + 4 hnu + 2 H2O = 2 a plastoquinol + O2. Functionally, photosystem II (PSII) is a light-driven water:plastoquinone oxidoreductase that uses light energy to abstract electrons from H(2)O, generating O(2) and a proton gradient subsequently used for ATP formation. It consists of a core antenna complex that captures photons, and an electron transfer chain that converts photonic excitation into a charge separation. The D1/D2 (PsbA/PsbD) reaction center heterodimer binds P680, the primary electron donor of PSII as well as several subsequent electron acceptors. This Microchaete diplosiphon (Fremyella diplosiphon) protein is Photosystem II protein D1.